A 219-amino-acid chain; its full sequence is Cytidylate kinase (219 aa).

15–23 contacts ATP; that stretch reads GPAASGKGT.

The protein belongs to the cytidylate kinase family. Type 1 subfamily.

The protein localises to the cytoplasm. The enzyme catalyses CMP + ATP = CDP + ADP. It carries out the reaction dCMP + ATP = dCDP + ADP. The polypeptide is Cytidylate kinase (Brucella melitensis biotype 2 (strain ATCC 23457)).